A 256-amino-acid polypeptide reads, in one-letter code: Ribonuclease 3 (256 aa).

Residues 3 to 125 (LDALQQRLGY…IVGAVFLDAG (123 aa)) form the RNase III domain. Glu-38 lines the Mg(2+) pocket. Asp-42 is an active-site residue. Residues Asp-111 and Glu-114 each coordinate Mg(2+). Glu-114 is an active-site residue. A DRBM domain is found at 152 to 222 (DAKTLLQEYL…AKLALDEVQK (71 aa)). Positions 229 to 256 (KRSRAERTGKTRKQPVPPDPQLSLRLKE) are disordered.

This sequence belongs to the ribonuclease III family. In terms of assembly, homodimer. The cofactor is Mg(2+).

It is found in the cytoplasm. The catalysed reaction is Endonucleolytic cleavage to 5'-phosphomonoester.. Functionally, digests double-stranded RNA. Involved in the processing of primary rRNA transcript to yield the immediate precursors to the large and small rRNAs (23S and 16S). Processes some mRNAs, and tRNAs when they are encoded in the rRNA operon. Processes pre-crRNA and tracrRNA of type II CRISPR loci if present in the organism. The chain is Ribonuclease 3 from Cupriavidus pinatubonensis (strain JMP 134 / LMG 1197) (Cupriavidus necator (strain JMP 134)).